A 383-amino-acid chain; its full sequence is Succinate--CoA ligase [ADP-forming] subunit beta (383 aa).

The region spanning Lys-9 to Arg-236 is the ATP-grasp domain. ATP contacts are provided by residues Lys-45, Gly-52–Gly-54, Glu-91, Ala-94, and Glu-99. Mg(2+)-binding residues include Asn-191 and Asp-205. Substrate-binding positions include Asn-256 and Gly-313–Thr-315.

The protein belongs to the succinate/malate CoA ligase beta subunit family. As to quaternary structure, heterotetramer of two alpha and two beta subunits. Mg(2+) serves as cofactor.

The catalysed reaction is succinate + ATP + CoA = succinyl-CoA + ADP + phosphate. It carries out the reaction GTP + succinate + CoA = succinyl-CoA + GDP + phosphate. It functions in the pathway carbohydrate metabolism; tricarboxylic acid cycle; succinate from succinyl-CoA (ligase route): step 1/1. Functionally, succinyl-CoA synthetase functions in the citric acid cycle (TCA), coupling the hydrolysis of succinyl-CoA to the synthesis of either ATP or GTP and thus represents the only step of substrate-level phosphorylation in the TCA. The beta subunit provides nucleotide specificity of the enzyme and binds the substrate succinate, while the binding sites for coenzyme A and phosphate are found in the alpha subunit. The polypeptide is Succinate--CoA ligase [ADP-forming] subunit beta (Rubrobacter xylanophilus (strain DSM 9941 / JCM 11954 / NBRC 16129 / PRD-1)).